The primary structure comprises 147 residues: 3-dehydroquinate dehydratase (147 aa).

Tyr23 functions as the Proton acceptor in the catalytic mechanism. Residues Asn74, His80, and Asp87 each contribute to the substrate site. His100 (proton donor) is an active-site residue. Substrate-binding positions include 101–102 (LS) and Arg111.

Belongs to the type-II 3-dehydroquinase family. Homododecamer.

It catalyses the reaction 3-dehydroquinate = 3-dehydroshikimate + H2O. It functions in the pathway metabolic intermediate biosynthesis; chorismate biosynthesis; chorismate from D-erythrose 4-phosphate and phosphoenolpyruvate: step 3/7. Functionally, catalyzes a trans-dehydration via an enolate intermediate. This chain is 3-dehydroquinate dehydratase, found in Glaesserella parasuis serovar 5 (strain SH0165) (Haemophilus parasuis).